We begin with the raw amino-acid sequence, 122 residues long: Large ribosomal subunit protein uL14 (122 aa).

This sequence belongs to the universal ribosomal protein uL14 family. In terms of assembly, part of the 50S ribosomal subunit. Forms a cluster with proteins L3 and L19. In the 70S ribosome, L14 and L19 interact and together make contacts with the 16S rRNA in bridges B5 and B8.

Its function is as follows. Binds to 23S rRNA. Forms part of two intersubunit bridges in the 70S ribosome. This is Large ribosomal subunit protein uL14 from Burkholderia vietnamiensis (strain G4 / LMG 22486) (Burkholderia cepacia (strain R1808)).